Here is a 262-residue protein sequence, read N- to C-terminus: Cytochrome c oxidase subunit 3 (262 aa).

A run of 7 helical transmembrane segments spans residues P16–F36, S39–W59, G83–F103, F128–A148, A160–M180, F198–V218, and W241–G261.

Belongs to the cytochrome c oxidase subunit 3 family. Component of the cytochrome c oxidase (complex IV, CIV), a multisubunit enzyme composed of a catalytic core of 3 subunits and several supernumerary subunits. The complex exists as a monomer or a dimer and forms supercomplexes (SCs) in the inner mitochondrial membrane with ubiquinol-cytochrome c oxidoreductase (cytochrome b-c1 complex, complex III, CIII).

It is found in the mitochondrion inner membrane. It carries out the reaction 4 Fe(II)-[cytochrome c] + O2 + 8 H(+)(in) = 4 Fe(III)-[cytochrome c] + 2 H2O + 4 H(+)(out). Functionally, component of the cytochrome c oxidase, the last enzyme in the mitochondrial electron transport chain which drives oxidative phosphorylation. The respiratory chain contains 3 multisubunit complexes succinate dehydrogenase (complex II, CII), ubiquinol-cytochrome c oxidoreductase (cytochrome b-c1 complex, complex III, CIII) and cytochrome c oxidase (complex IV, CIV), that cooperate to transfer electrons derived from NADH and succinate to molecular oxygen, creating an electrochemical gradient over the inner membrane that drives transmembrane transport and the ATP synthase. Cytochrome c oxidase is the component of the respiratory chain that catalyzes the reduction of oxygen to water. Electrons originating from reduced cytochrome c in the intermembrane space (IMS) are transferred via the dinuclear copper A center (CU(A)) of subunit 2 and heme A of subunit 1 to the active site in subunit 1, a binuclear center (BNC) formed by heme A3 and copper B (CU(B)). The BNC reduces molecular oxygen to 2 water molecules using 4 electrons from cytochrome c in the IMS and 4 protons from the mitochondrial matrix. The protein is Cytochrome c oxidase subunit 3 (COIII) of Metridium senile (Brown sea anemone).